The sequence spans 604 residues: Probable translation initiation factor IF-2 (604 aa).

Residues 18-232 (IRTPIVCVLG…VLIGLAQRYM (215 aa)) enclose the tr-type G domain. Residues 27-34 (GHVDHGKT) form a G1 region. 27–34 (GHVDHGKT) provides a ligand contact to GTP. The segment at 52–56 (AITQH) is G2. Positions 88 to 91 (DTPG) are G3. Residues 88 to 92 (DTPGH) and 142 to 145 (TKLD) contribute to the GTP site. Residues 142–145 (TKLD) form a G4 region. The tract at residues 210 to 212 (SAH) is G5.

The protein belongs to the TRAFAC class translation factor GTPase superfamily. Classic translation factor GTPase family. IF-2 subfamily.

Functionally, function in general translation initiation by promoting the binding of the formylmethionine-tRNA to ribosomes. Seems to function along with eIF-2. The chain is Probable translation initiation factor IF-2 from Methanospirillum hungatei JF-1 (strain ATCC 27890 / DSM 864 / NBRC 100397 / JF-1).